An 859-amino-acid polypeptide reads, in one-letter code: DNA mismatch repair protein MutS (859 aa).

Gly622–Ser629 provides a ligand contact to ATP.

It belongs to the DNA mismatch repair MutS family.

This protein is involved in the repair of mismatches in DNA. It is possible that it carries out the mismatch recognition step. This protein has a weak ATPase activity. The chain is DNA mismatch repair protein MutS from Syntrophomonas wolfei subsp. wolfei (strain DSM 2245B / Goettingen).